We begin with the raw amino-acid sequence, 159 residues long: Superoxide dismutase [Cu-Zn] (159 aa).

His-47, His-49, and His-64 together coordinate Cu cation. The cysteines at positions 58 and 150 are disulfide-linked. Residues His-64, His-72, His-81, and Asp-84 each contribute to the Zn(2+) site. Position 121 (His-121) interacts with Cu cation.

Belongs to the Cu-Zn superoxide dismutase family. Requires Cu cation as cofactor. Zn(2+) serves as cofactor.

The protein localises to the cytoplasm. The enzyme catalyses 2 superoxide + 2 H(+) = H2O2 + O2. Its function is as follows. Destroys radicals which are normally produced within the cells and which are toxic to biological systems. In Haemonchus contortus (Barber pole worm), this protein is Superoxide dismutase [Cu-Zn] (SOD).